The following is a 128-amino-acid chain: Fluoride-specific ion channel FluC (128 aa).

The next 4 helical transmembrane spans lie at 7–27, 37–57, 73–93, and 96–116; these read LAIG…AGLV, FGTL…IGAI, TGMM…FFLF, and ALYI…IILA. Na(+)-binding residues include glycine 77 and threonine 80.

It belongs to the fluoride channel Fluc/FEX (TC 1.A.43) family.

It is found in the cell inner membrane. The catalysed reaction is fluoride(in) = fluoride(out). With respect to regulation, na(+) is not transported, but it plays an essential structural role and its presence is essential for fluoride channel function. Functionally, fluoride-specific ion channel. Important for reducing fluoride concentration in the cell, thus reducing its toxicity. The protein is Fluoride-specific ion channel FluC of Nautilia profundicola (strain ATCC BAA-1463 / DSM 18972 / AmH).